Consider the following 493-residue polypeptide: ATP synthase subunit beta (493 aa).

Residue 169 to 176 (GGAGVGKT) participates in ATP binding.

The protein belongs to the ATPase alpha/beta chains family. F-type ATPases have 2 components, CF(1) - the catalytic core - and CF(0) - the membrane proton channel. CF(1) has five subunits: alpha(3), beta(3), gamma(1), delta(1), epsilon(1). CF(0) has three main subunits: a(1), b(2) and c(9-12). The alpha and beta chains form an alternating ring which encloses part of the gamma chain. CF(1) is attached to CF(0) by a central stalk formed by the gamma and epsilon chains, while a peripheral stalk is formed by the delta and b chains.

Its subcellular location is the cell inner membrane. It carries out the reaction ATP + H2O + 4 H(+)(in) = ADP + phosphate + 5 H(+)(out). Functionally, produces ATP from ADP in the presence of a proton gradient across the membrane. The catalytic sites are hosted primarily by the beta subunits. The chain is ATP synthase subunit beta from Gluconacetobacter diazotrophicus (strain ATCC 49037 / DSM 5601 / CCUG 37298 / CIP 103539 / LMG 7603 / PAl5).